The chain runs to 212 residues: MNNSLIVRQLGLQDYQEIWHKMQDFTDTRNAETQDEIWLVQHYPVFTQGQAGKPEHLLQRSEIPVVQSVRGGQITYHAPGQQVMYVLIDIKRHKNLNVRQLVTALEQTVVKTLAEYGIESYPKPDAPGVYVDGKKICSLGLRIRRGCSFHGLALNINMDLNPFHYINPCGYAGLEMCQLADFVNQDKADCDNVSAKLIKHFANLLGYNITTL.

In terms of domain architecture, BPL/LPL catalytic spans 31–209 (AETQDEIWLV…HFANLLGYNI (179 aa)). Residues 70 to 77 (RGGQITYH), 138 to 140 (SLG), and 151 to 153 (GLA) each bind substrate. Cys-169 (acyl-thioester intermediate) is an active-site residue.

The protein belongs to the LipB family.

It localises to the cytoplasm. The enzyme catalyses octanoyl-[ACP] + L-lysyl-[protein] = N(6)-octanoyl-L-lysyl-[protein] + holo-[ACP] + H(+). It functions in the pathway protein modification; protein lipoylation via endogenous pathway; protein N(6)-(lipoyl)lysine from octanoyl-[acyl-carrier-protein]: step 1/2. Functionally, catalyzes the transfer of endogenously produced octanoic acid from octanoyl-acyl-carrier-protein onto the lipoyl domains of lipoate-dependent enzymes. Lipoyl-ACP can also act as a substrate although octanoyl-ACP is likely to be the physiological substrate. This chain is Octanoyltransferase, found in Haemophilus influenzae (strain ATCC 51907 / DSM 11121 / KW20 / Rd).